We begin with the raw amino-acid sequence, 288 residues long: Stress response protein YhaX (288 aa).

The polypeptide is Stress response protein YhaX (yhaX) (Bacillus subtilis (strain 168)).